The primary structure comprises 61 residues: Small ribosomal subunit protein uS14 (61 aa).

Zn(2+) contacts are provided by C24, C27, C40, and C43.

This sequence belongs to the universal ribosomal protein uS14 family. Zinc-binding uS14 subfamily. Part of the 30S ribosomal subunit. Contacts proteins S3 and S10. Zn(2+) serves as cofactor.

In terms of biological role, binds 16S rRNA, required for the assembly of 30S particles and may also be responsible for determining the conformation of the 16S rRNA at the A site. The sequence is that of Small ribosomal subunit protein uS14 from Deinococcus deserti (strain DSM 17065 / CIP 109153 / LMG 22923 / VCD115).